We begin with the raw amino-acid sequence, 209 residues long: Small ribosomal subunit protein uS4 (209 aa).

Residues 99 to 162 form the S4 RNA-binding domain; sequence RRLDNMVYRL…RKNNKIIEAM (64 aa).

This sequence belongs to the universal ribosomal protein uS4 family. In terms of assembly, part of the 30S ribosomal subunit. Contacts protein S5. The interaction surface between S4 and S5 is involved in control of translational fidelity.

Functionally, one of the primary rRNA binding proteins, it binds directly to 16S rRNA where it nucleates assembly of the body of the 30S subunit. With S5 and S12 plays an important role in translational accuracy. This chain is Small ribosomal subunit protein uS4, found in Syntrophus aciditrophicus (strain SB).